Reading from the N-terminus, the 848-residue chain is Dolabradiene synthase KSL4, chloroplastic (848 aa).

Residues 1–64 (MASLSFASSH…SRMPRNVDTH (64 aa)) constitute a chloroplast transit peptide. A disordered region spans residues 148–168 (QRSDGSWGPDGGSGDHPSSPL). Residues D597, D601, N742, S746, and E750 each coordinate Mg(2+). The DDXXD motif signature appears at 597–601 (DDLFD).

The protein belongs to the terpene synthase family. Requires Mg(2+) as cofactor.

The protein resides in the plastid. The protein localises to the chloroplast. It carries out the reaction ent-copalyl diphosphate = dolabradiene + diphosphate. Involved in the production of antifungal dolabralexin phytoalexins in response to biotic and abiotic stresses. In response to fungal infection and in associtation with AN2, is involved in the production dolabradiene, a type of antifungal phytoalexin. Converts ent-copalyl disphosphate (ent-CPP) to dolabradiene. This Zea mays (Maize) protein is Dolabradiene synthase KSL4, chloroplastic.